We begin with the raw amino-acid sequence, 510 residues long: Lysine--tRNA ligase (510 aa).

2 residues coordinate Mg(2+): E420 and E427.

This sequence belongs to the class-II aminoacyl-tRNA synthetase family. In terms of assembly, homodimer. It depends on Mg(2+) as a cofactor.

It localises to the cytoplasm. It catalyses the reaction tRNA(Lys) + L-lysine + ATP = L-lysyl-tRNA(Lys) + AMP + diphosphate. The protein is Lysine--tRNA ligase of Vibrio campbellii (strain ATCC BAA-1116).